Here is a 103-residue protein sequence, read N- to C-terminus: Large ribosomal subunit protein bL21 (103 aa).

The protein belongs to the bacterial ribosomal protein bL21 family. In terms of assembly, part of the 50S ribosomal subunit. Contacts protein L20.

Functionally, this protein binds to 23S rRNA in the presence of protein L20. The sequence is that of Large ribosomal subunit protein bL21 from Treponema denticola (strain ATCC 35405 / DSM 14222 / CIP 103919 / JCM 8153 / KCTC 15104).